The following is a 428-amino-acid chain: Putative UPF0496 protein 5 (428 aa).

Residues Met1–Ala14 show a composition bias toward basic residues. The interval Met1–Cys40 is disordered. Acidic residues predominate over residues Ala22–Gly31. The next 2 helical transmembrane spans lie at Ile229–Ala249 and Pro252–Met272.

Belongs to the UPF0496 family.

The protein localises to the membrane. In Oryza sativa subsp. indica (Rice), this protein is Putative UPF0496 protein 5.